The chain runs to 317 residues: Olfactory receptor 51Q1 (317 aa).

Over 1–27 (MSQVTNTTQEGIYFILTDIPGFEASHI) the chain is Extracellular. Asn-6 carries N-linked (GlcNAc...) asparagine glycosylation. A helical membrane pass occupies residues 28–48 (WISIPVCCLYTISIMGNTTIL). The Cytoplasmic portion of the chain corresponds to 49–56 (TVIRTEPS). Residues 57-77 (VHQRMYLFLSMLALTDLGLTL) traverse the membrane as a helical segment. Over 78–101 (TTLPTVMQLLWFNVRRISSEACFA) the chain is Extracellular. Cys-99 and Cys-191 are joined by a disulfide. A helical membrane pass occupies residues 102 to 122 (QFFFLHGFSFMESSVLLAMSV). Residues 123 to 141 (DCYVAICCPLHYASILTNE) lie on the Cytoplasmic side of the membrane. The chain crosses the membrane as a helical span at residues 142-162 (VIGRTGLAIICCCVLAVLPSL). Topologically, residues 163–198 (FLLKRLPFCHSHLLSRSYCLHQDMIRLVCADIRLNS) are extracellular. A helical transmembrane segment spans residues 199–219 (WYGFALALLIIIVDPLLIVIS). Over 220–239 (YTLILKNILGTATWAERLRA) the chain is Cytoplasmic. A helical transmembrane segment spans residues 240–260 (LNNCLSHILAVLVLYIPMVGV). The Extracellular segment spans residues 261–275 (SMTHRFAKHASPLVH). Residues 276–296 (VIMANIYLLAPPVMNPIIYSV) traverse the membrane as a helical segment. At 297–317 (KNKQIQWGMLNFLSLKNMHSR) the chain is on the cytoplasmic side.

This sequence belongs to the G-protein coupled receptor 1 family.

It is found in the cell membrane. Its function is as follows. Odorant receptor. The polypeptide is Olfactory receptor 51Q1 (OR51Q1) (Homo sapiens (Human)).